The chain runs to 160 residues: Transcription elongation factor GreA (160 aa).

The stretch at 43–75 (LSENAEYEAAREQQAQMESKIVDLENKLTRASI) forms a coiled coil.

The protein belongs to the GreA/GreB family.

Necessary for efficient RNA polymerase transcription elongation past template-encoded arresting sites. The arresting sites in DNA have the property of trapping a certain fraction of elongating RNA polymerases that pass through, resulting in locked ternary complexes. Cleavage of the nascent transcript by cleavage factors such as GreA or GreB allows the resumption of elongation from the new 3'terminus. GreA releases sequences of 2 to 3 nucleotides. This is Transcription elongation factor GreA from Prosthecochloris aestuarii (strain DSM 271 / SK 413).